Reading from the N-terminus, the 98-residue chain is uncharacterized protein (98 aa).

2 helical membrane passes run 13–33 (LFSLAINEPSPTFALTIIAIF) and 65–85 (IMVIISYLKYVNLPCSFIFIS).

It is found in the membrane. This is an uncharacterized protein from Saccharomyces cerevisiae (strain ATCC 204508 / S288c) (Baker's yeast).